The sequence spans 121 residues: Large ribosomal subunit protein bL12 (121 aa).

Belongs to the bacterial ribosomal protein bL12 family. As to quaternary structure, homodimer. Part of the ribosomal stalk of the 50S ribosomal subunit. Forms a multimeric L10(L12)X complex, where L10 forms an elongated spine to which 2 to 4 L12 dimers bind in a sequential fashion. Binds GTP-bound translation factors.

Forms part of the ribosomal stalk which helps the ribosome interact with GTP-bound translation factors. Is thus essential for accurate translation. The chain is Large ribosomal subunit protein bL12 from Enterobacter sp. (strain 638).